A 192-amino-acid chain; its full sequence is Cysteine and glycine-rich protein 1 (192 aa).

The region spanning Cys10–Cys61 is the LIM zinc-binding 1 domain. The Nuclear localization signal motif lies at Lys64–Lys69. The LIM zinc-binding 2 domain occupies Cys118–Cys169.

In terms of assembly, probable monomer. Interacts with ZYX. Most prominent in tissues that are enriched in smooth muscle cells, such as gizzard, stomach, and intestine. Lower level in the heart, no expression in liver, skeletal muscle, or brain.

It localises to the nucleus. The protein localises to the cytoplasm. Its subcellular location is the cytoskeleton. In terms of biological role, heat stable protein, that interacts with zyxin/ZYX. May be a component of a signal transduction pathway that mediates adhesion-stimulated changes in gene expression. This Gallus gallus (Chicken) protein is Cysteine and glycine-rich protein 1 (CSRP1).